A 453-amino-acid polypeptide reads, in one-letter code: Wall-associated protein (453 aa).

The N-terminal stretch at 1–29 is a signal peptide; that stretch reads MKMKRKLLSLVSVLTILLGAFWVTKIVKA. A disordered region spans residues 331-403; sequence GRASSRVKRQ…TASQTNVPTT (73 aa). Residues 342-403 are compositionally biased toward low complexity; the sequence is ETTTVTETTT…TASQTNVPTT (62 aa). The LPXTG sorting signal motif lies at 422-426; it reads LPSTG. Thr425 is modified (pentaglycyl murein peptidoglycan amidated threonine). Positions 426-453 are cleaved as a propeptide — removed by sortase; the sequence is GEQAGLLLTTVGLVIVAVAGVYFYRTRR.

It localises to the secreted. The protein resides in the cell wall. The chain is Wall-associated protein (wapA) from Streptococcus mutans serotype c (strain ATCC 700610 / UA159).